Here is a 537-residue protein sequence, read N- to C-terminus: Protein disulfide isomerase-like 1-5 (537 aa).

Positions 1-29 (MSLIPKPISKVSTFTFILLILLSFTIIIA) are cleaved as a signal peptide. Residues 58-184 (LQEDRPEQQS…IVIWVQKKTG (127 aa)) form the Thioredoxin 1 domain. C106 serves as the catalytic Nucleophile. Residues N160, N364, and N416 are each glycosylated (N-linked (GlcNAc...) asparagine). The Thioredoxin 2 domain occupies 380–526 (LLESDPSPNS…IAVFINEELL (147 aa)). Catalysis depends on nucleophile residues C447 and C450. A disulfide bridge links C447 with C450. N530 carries N-linked (GlcNAc...) asparagine glycosylation. Residues 534 to 537 (KDEL) carry the Prevents secretion from ER motif.

It belongs to the protein disulfide isomerase family. In terms of tissue distribution, widely expressed.

The protein localises to the endoplasmic reticulum lumen. It catalyses the reaction Catalyzes the rearrangement of -S-S- bonds in proteins.. Its function is as follows. Acts as a protein-folding catalyst that interacts with nascent polypeptides to catalyze the formation, isomerization, and reduction or oxidation of disulfide bonds. This Arabidopsis thaliana (Mouse-ear cress) protein is Protein disulfide isomerase-like 1-5 (PDIL1-5).